Reading from the N-terminus, the 343-residue chain is Nuclear distribution protein nudE-like 1 (343 aa).

Residues 25–190 adopt a coiled-coil conformation; the sequence is KYKQSFQEAR…LAVRERQQEV (166 aa). Disordered regions lie at residues 184–204 and 322–343; these read RERQ…LDCE and QGTP…PLSV.

It belongs to the nudE family. Phosphorylated in mitosis.

It localises to the cytoplasm. It is found in the cytoskeleton. The protein localises to the microtubule organizing center. Its subcellular location is the centrosome. The protein resides in the spindle. Functionally, required for organization of the cellular microtubule array and microtubule anchoring at the centrosome. Positively regulates the activity of the minus-end directed microtubule motor protein dynein. May enhance dynein-mediated microtubule sliding by targeting dynein to the microtubule plus end. Positively regulates lysosome peripheral distribution and ruffled border formation in osteoclasts. The polypeptide is Nuclear distribution protein nudE-like 1 (NDEL1) (Gallus gallus (Chicken)).